Here is a 290-residue protein sequence, read N- to C-terminus: Translin-associated protein X (290 aa).

A disordered region spans residues 1–34; sequence MNGKEGPGGFRKRKHDNFPHNQRREGKDASSSSP. The segment covering 16-28 has biased composition (basic and acidic residues); that stretch reads DNFPHNQRREGKD. The interval 73–208 is interaction with C1D; sequence LLHRITSAPD…MRMCINSVGN (136 aa). Residues Glu129 and Glu197 each contribute to the Mg(2+) site. Lys279 is covalently cross-linked (Glycyl lysine isopeptide (Lys-Gly) (interchain with G-Cter in SUMO2)).

This sequence belongs to the translin family. Ring-shaped heterooctamer of six TSN and two TSNAX subunits. Interacts with GOLGA3, TSNAXIP1, SUN1 and AKAP9. Interacts with the homodimeric form of C1D following gamma-radiation. Interacts with TSN and C1D in a mutually exclusive manner. Post-translationally, sumoylated with SUMO1. As to expression, detected in cerebellum.

The protein localises to the cytoplasm. It is found in the perinuclear region. It localises to the golgi apparatus. Its subcellular location is the nucleus. Functionally, acts in combination with TSN as an endonuclease involved in the activation of the RNA-induced silencing complex (RISC). Possible role in spermatogenesis. This chain is Translin-associated protein X (Tsnax), found in Rattus norvegicus (Rat).